Here is a 152-residue protein sequence, read N- to C-terminus: Large-conductance mechanosensitive channel (152 aa).

A run of 3 helical transmembrane segments spans residues 26–46 (VLDL…VGSA), 50–70 (ILTP…LFIT), and 92–112 (IGVF…IFWL).

The protein belongs to the MscL family. In terms of assembly, homopentamer.

Its subcellular location is the cell inner membrane. Its function is as follows. Channel that opens in response to stretch forces in the membrane lipid bilayer. May participate in the regulation of osmotic pressure changes within the cell. The protein is Large-conductance mechanosensitive channel of Gluconobacter oxydans (strain 621H) (Gluconobacter suboxydans).